The following is a 2097-amino-acid chain: 1-phosphatidylinositol 3-phosphate 5-kinase (2097 aa).

The segment at 1 to 44 is disordered; the sequence is MATDDKSSPTLDSANDLPRSPASPSHLTHFKPLTPDQDEPPFKS. A2 is modified (N-acetylalanine). Phosphoserine; by autocatalysis occurs at positions 23 and 48. The interval 56–122 is disordered; that stretch reads NKERGEGGQG…AEPACGGHDP (67 aa). Low complexity predominate over residues 66-81; sequence EQQSPSSSWASPQIPS. At S88 the chain carries Phosphoserine. The FYVE-type zinc-finger motif lies at 158-218; that stretch reads DSQCKECYDC…ACTYCRKIAL (61 aa). Zn(2+) contacts are provided by C164, C167, C180, C183, C188, C191, C210, and C213. Residues S299, S307, and S312 each carry the phosphoserine modification. S318 is subject to Phosphoserine; by PKB/AKT1 or PKB/AKT2. The residue at position 329 (S329) is a Phosphoserine. The DEP domain occupies 365-440; sequence HTSGMEFQDH…DEYALYRPLQ (76 aa). Over residues 442–459 the composition is skewed to polar residues; that stretch reads TEFSETPSPDSDSVNSVE. Residues 442-469 are disordered; it reads TEFSETPSPDSDSVNSVEGHSEPSWFKD. Residues 460-469 show a composition bias toward basic and acidic residues; the sequence is GHSEPSWFKD. S475 carries the post-translational modification Phosphoserine. The disordered stretch occupies residues 484–505; it reads GDDNLANSASPSKRTSVSSFQS. Polar residues predominate over residues 488 to 505; the sequence is LANSASPSKRTSVSSFQS. Positions 616–868 are chaperonin-like domain; it reads MMALLQQLLQ…MICVAYHSQL (253 aa). 4 disordered regions span residues 895 to 928, 989 to 1022, 1171 to 1194, and 1511 to 1555; these read GRGE…EDST, AVGN…QDDT, HSKD…EERG, and FQQE…HNGE. A compositionally biased stretch (polar residues) spans 902 to 912; it reads SQEQVSGSSLP. Polar residues predominate over residues 1175–1184; sequence ASCTSGGKSG. Over residues 1185 to 1194 the composition is skewed to basic and acidic residues; sequence NKTESDEERG. Phosphoserine occurs at positions 1543 and 1548. S1668 is modified (phosphoserine; by autocatalysis). The interval 1697–1742 is disordered; the sequence is EGLPANSALDNRPKSSSPIRLPEISGGQTNRTVEAEPQPTKKASGM. S1753 is modified (phosphoserine). The 327-residue stretch at 1757 to 2083 folds into the PIPK domain; the sequence is SSQKRETLRG…RFCEAMDKYF (327 aa). Residues 1781 to 1800 form a disordered region; it reads GLESQGLEPQDEVDGGDTQK. Residues 1841 to 2097 are catalytic; that stretch reads EEEFIRSLSH…DHWTGLDLNC (257 aa). S1968 and S2052 each carry phosphoserine; by autocatalysis.

Component of the PI(3,5)P2 regulatory complex/PAS complex, at least composed of PIKFYVE, FIG4 and VAC14. VAC14 nucleates the assembly of the complex and serves as a scaffold by pentamerizing into a star-shaped structure, which can bind a single copy each of PIKFYVE and FIG4 and coordinates their activities. Interacts (via chaperonin-like domain) with RABEPK; the interaction recruits RABEPK to the endosomal membrane. Interacts with SPAG9. Interacts with EGFR. It depends on Mn(2+) as a cofactor. Phosphorylated in response to insulin at Ser-318 in a protein kinase B (PKB)-dependent manner. Autophosphorylates which down-regulates lipid product formation. Post-translationally, autophosphorylates which inhibits its own phosphatidylinositol 3-phosphate 5-kinase activity, stimulates FIG4 lipid phosphatase activity and down-regulates lipid product formation. Dephosphorylated by FIG4 in the PI(3,5)P2 regulatory complex, at Ser-48, Ser-1668 and Ser-2052. Phosphorylated in response to insulin at Ser-318 in a protein kinase B (PKB)-dependent manner. Ubiquitous.

It is found in the endosome membrane. It localises to the early endosome membrane. The protein localises to the cytoplasmic vesicle. The protein resides in the phagosome membrane. Its subcellular location is the late endosome membrane. It catalyses the reaction a 1,2-diacyl-sn-glycero-3-phospho-(1D-myo-inositol-3-phosphate) + ATP = a 1,2-diacyl-sn-glycero-3-phospho-(1D-myo-inositol-3,5-bisphosphate) + ADP + H(+). The enzyme catalyses a 1,2-diacyl-sn-glycero-3-phospho-(1D-myo-inositol) + ATP = a 1,2-diacyl-sn-glycero-3-phospho-(1D-myo-inositol-5-phosphate) + ADP + H(+). It carries out the reaction L-seryl-[protein] + ATP = O-phospho-L-seryl-[protein] + ADP + H(+). Inhibited by apilimod and YM201636. Its function is as follows. Dual specificity kinase implicated in myriad essential cellular processes such as maintenance of endomembrane homeostasis, and endocytic-vacuolar pathway, lysosomal trafficking, nuclear transport, stress- or hormone-induced signaling and cell cycle progression. The PI(3,5)P2 regulatory complex regulates both the synthesis and turnover of phosphatidylinositol 3,5-bisphosphate (PtdIns(3,5)P2). Sole enzyme to catalyze the phosphorylation of phosphatidylinositol 3-phosphate on the fifth hydroxyl of the myo-inositol ring, to form (PtdIns(3,5)P2). Also catalyzes the phosphorylation of phosphatidylinositol on the fifth hydroxyl of the myo-inositol ring, to form phosphatidylinositol 5-phosphate (PtdIns(5)P). Has serine-protein kinase activity and is able to autophosphorylate and transphosphorylate. Autophosphorylation inhibits its own phosphatidylinositol 3-phosphate 5-kinase activity, stimulates FIG4 lipid phosphatase activity and down-regulates lipid product formation. Involved in key endosome operations such as fission and fusion in the course of endosomal cargo transport. Required for the maturation of early into late endosomes, phagosomes and lysosomes. Regulates vacuole maturation and nutrient recovery following engulfment of macromolecules, initiates the redistribution of accumulated lysosomal contents back into the endosome network. Critical regulator of the morphology, degradative activity, and protein turnover of the endolysosomal system in macrophages and platelets. In neutrophils, critical to perform chemotaxis, generate ROS, and undertake phagosome fusion with lysosomes. Plays a key role in the processing and presentation of antigens by major histocompatibility complex class II (MHC class II) mediated by CTSS. Regulates melanosome biogenesis by controlling the delivery of proteins from the endosomal compartment to the melanosome. Essential for systemic glucose homeostasis, mediates insulin-induced signals for endosome/actin remodeling in the course of GLUT4 translocation/glucose uptake activation. Supports microtubule-based endosome-to-trans-Golgi network cargo transport, trhough association with SPAG9 and RABEPK. Mediates EGFR trafficking to the nucleus. In Mus musculus (Mouse), this protein is 1-phosphatidylinositol 3-phosphate 5-kinase.